We begin with the raw amino-acid sequence, 99 residues long: NAD(P)H-quinone oxidoreductase subunit 4L, chloroplastic (99 aa).

A run of 3 helical transmembrane segments spans residues 1-21, 31-51, and 59-79; these read MFEQ…FGLI, MSLE…SNLF, and IFTL…LAIA.

Belongs to the complex I subunit 4L family. NDH is composed of at least 16 different subunits, 5 of which are encoded in the nucleus.

The protein resides in the plastid. Its subcellular location is the chloroplast thylakoid membrane. The catalysed reaction is a plastoquinone + NADH + (n+1) H(+)(in) = a plastoquinol + NAD(+) + n H(+)(out). It catalyses the reaction a plastoquinone + NADPH + (n+1) H(+)(in) = a plastoquinol + NADP(+) + n H(+)(out). NDH shuttles electrons from NAD(P)H:plastoquinone, via FMN and iron-sulfur (Fe-S) centers, to quinones in the photosynthetic chain and possibly in a chloroplast respiratory chain. The immediate electron acceptor for the enzyme in this species is believed to be plastoquinone. Couples the redox reaction to proton translocation, and thus conserves the redox energy in a proton gradient. The chain is NAD(P)H-quinone oxidoreductase subunit 4L, chloroplastic from Adiantum capillus-veneris (Maidenhair fern).